Here is a 248-residue protein sequence, read N- to C-terminus: Aspartate/glutamate leucyltransferase (248 aa).

It belongs to the R-transferase family. Bpt subfamily.

It localises to the cytoplasm. It carries out the reaction N-terminal L-glutamyl-[protein] + L-leucyl-tRNA(Leu) = N-terminal L-leucyl-L-glutamyl-[protein] + tRNA(Leu) + H(+). The catalysed reaction is N-terminal L-aspartyl-[protein] + L-leucyl-tRNA(Leu) = N-terminal L-leucyl-L-aspartyl-[protein] + tRNA(Leu) + H(+). Its function is as follows. Functions in the N-end rule pathway of protein degradation where it conjugates Leu from its aminoacyl-tRNA to the N-termini of proteins containing an N-terminal aspartate or glutamate. This chain is Aspartate/glutamate leucyltransferase, found in Methylobacterium nodulans (strain LMG 21967 / CNCM I-2342 / ORS 2060).